The primary structure comprises 239 residues: Orotidine 5'-phosphate decarboxylase (239 aa).

Residues D10, K32, 59 to 68, T122, R184, Q193, G213, and R214 contribute to the substrate site; that span reads DLKLHDIPNT. The active-site Proton donor is the K61.

Belongs to the OMP decarboxylase family. Type 1 subfamily. In terms of assembly, homodimer.

The enzyme catalyses orotidine 5'-phosphate + H(+) = UMP + CO2. Its pathway is pyrimidine metabolism; UMP biosynthesis via de novo pathway; UMP from orotate: step 2/2. Its function is as follows. Catalyzes the decarboxylation of orotidine 5'-monophosphate (OMP) to uridine 5'-monophosphate (UMP). The chain is Orotidine 5'-phosphate decarboxylase from Shouchella clausii (strain KSM-K16) (Alkalihalobacillus clausii).